Here is a 340-residue protein sequence, read N- to C-terminus: Sulfotransferase 2B1 (340 aa).

Position 67-72 (67-72) interacts with 3'-phosphoadenylyl sulfate; the sequence is KSGTNW. Residues Trp95 and Trp100 each contribute to the substrate site. Catalysis depends on His122, which acts as the Proton acceptor. 3'-phosphoadenylyl sulfate is bound by residues Arg144, Ser152, Tyr207, 241 to 246, and 271 to 273; these read SAFAAM and RKG. Residues 301 to 340 are disordered; it reads LPSFPWDRSAEDGSPDGETEPSPSPSPGLASDDPNPGSSQ.

This sequence belongs to the sulfotransferase 1 family. In terms of tissue distribution, isoform 1 is expressed in skin and testis. Higher level of isoform 2 expressed in skin and intestine, moderate level in the kidney, low level in liver, stomach and placenta.

It localises to the cytoplasm. The protein resides in the cytosol. The protein localises to the microsome. Its subcellular location is the nucleus. The enzyme catalyses an alcohol + 3'-phosphoadenylyl sulfate = an alkyl sulfate + adenosine 3',5'-bisphosphate + H(+). The catalysed reaction is pregnenolone + 3'-phosphoadenylyl sulfate = pregnenolone sulfate + adenosine 3',5'-bisphosphate + H(+). It carries out the reaction 3beta-hydroxyandrost-5-en-17-one + 3'-phosphoadenylyl sulfate = dehydroepiandrosterone 3-sulfate + adenosine 3',5'-bisphosphate + H(+). It catalyses the reaction cholesterol + 3'-phosphoadenylyl sulfate = cholesterol sulfate + adenosine 3',5'-bisphosphate + H(+). Functionally, sulfotransferase that utilizes 3'-phospho-5'-adenylyl sulfate (PAPS) as sulfonate donor to catalyze the sulfate conjugation. Sulfonation increases the water solubility of most compounds, and therefore their renal excretion, but it can also result in bioactivation to form active metabolites. Sulfonates cholesterol. Catalyzes sulfation of the 3beta-hydroxyl groups of steroids, such as, pregnenolone and dehydroepiandrosterone (DHEA). Conjugates efficiently cholesterol but has a greater affinity for pregnenolone sulfation. Does not show high activity with DHEA. Plays a role in epidermal cholesterol metabolism and in the regulation of epidermal proliferation and differentiation. Its function is as follows. Prefers pregnenolone over DHEA as a substrate and does not sulfate cholesterol. The polypeptide is Sulfotransferase 2B1 (Rattus norvegicus (Rat)).